A 432-amino-acid polypeptide reads, in one-letter code: Calcium uptake protein 2, mitochondrial (432 aa).

A mitochondrion-targeting transit peptide spans 1 to 22 (MAAAAGRSAWLAAWGGRLRRGL). Residues 169 to 204 (KPHSGFHVAFKMLDVDGNEMIERKEFVRLQKIISKQ) form the EF-hand 1 domain. 6 residues coordinate Ca(2+): Asp-182, Asp-184, Asn-186, Met-188, Glu-190, and Glu-193. Position 202 is a phosphoserine (Ser-202). Positions 224–259 (EPGVNTTLQVRFFGKRGEKKLHYKEFRRFVENLQTE) constitute an EF-hand 2; degenerate domain. The EF-hand 3; degenerate domain maps to 290-325 (TENKDIYWRNVREKLSVGESISLDEFKSFCHFTTHL). The region spanning 359 to 394 (LSDNLLDTVFKIFDLDGDECLSHGEFLGVLKNRMHR) is the EF-hand 4 domain. Ca(2+) is bound by residues Asp-372, Asp-374, Asp-376, Cys-378, and Glu-383.

It belongs to the MICU1 family. MICU2 subfamily. As to quaternary structure, heterodimer; disulfide-linked; heterodimerizes with MICU1. Component of the uniplex complex, composed of MCU, EMRE/SMDT1, MICU1 and MICU2 in a 4:4:1:1 stoichiometry.

It is found in the mitochondrion intermembrane space. The protein resides in the mitochondrion inner membrane. Calcium sensor of the mitochondrial calcium uniporter (MCU) channel, which senses calcium level via its EF-hand domains. MICU1 and MICU2 form a disulfide-linked heterodimer that stimulates and inhibits MCU activity, depending on the concentration of calcium. At low calcium levels, MICU1 occludes the pore of the MCU channel, preventing mitochondrial calcium uptake. At higher calcium levels, calcium-binding to MICU1 and MICU2 induces a conformational change that weakens MCU-MICU1 interactions and moves the MICU1-MICU2 heterodimer away from the pore, allowing calcium permeation through the MCU channel. This Rattus norvegicus (Rat) protein is Calcium uptake protein 2, mitochondrial (Micu2).